A 2360-amino-acid polypeptide reads, in one-letter code: DNA (cytosine-5-)-methyltransferase DMT5 (2360 aa).

Residues 48–507 (FTVGTMCSGT…LCILIAERQV (460 aa)) enclose the SAM-dependent MTase C5-type domain. C146 is a catalytic residue. Residues 1258–1575 (AEVVNRARGG…CAIADLVNMH (318 aa)) form the Helicase ATP-binding domain. Position 1271 to 1278 (1271 to 1278 (HDVGFGKT)) interacts with ATP. Residues 1451–1498 (SRRKDQKSKATARTQRAKKKSKKPRRTAAAAAESDHSAESDSDSAMDD) are disordered. Positions 1465 to 1476 (QRAKKKSKKPRR) are enriched in basic residues. An RING-type; degenerate zinc finger spans residues 2018–2070 (CSVCGSQDNTEMKDLSLFITCGHLLCSGCVAAHEHQHGQAESTTGEVLCPVDS). The 166-residue stretch at 2102-2267 (KVMKILDVIR…RMPLDDLDYK (166 aa)) folds into the Helicase C-terminal domain.

In the N-terminal section; belongs to the class I-like SAM-binding methyltransferase superfamily. C5-methyltransferase family. This sequence in the C-terminal section; belongs to the SNF2/RAD54 helicase family.

The protein localises to the nucleus. Its subcellular location is the chromosome. The enzyme catalyses a 2'-deoxycytidine in DNA + S-adenosyl-L-methionine + ATP + H2O = a 5-methyl-2'-deoxycytidine in DNA + S-adenosyl-L-homocysteine + ADP + phosphate + 2 H(+). In terms of biological role, may play a role in cytosine methylation at palindromic 5'-CG-3' and 5'-C[ACT]G-3' sites in DNA. The protein is DNA (cytosine-5-)-methyltransferase DMT5 of Verticillium dahliae (strain VdLs.17 / ATCC MYA-4575 / FGSC 10137) (Verticillium wilt).